The sequence spans 29 residues: Cytochrome c oxidase subunit 7A2, mitochondrial (29 aa).

Lys10 carries the N6-acetyllysine modification.

The protein belongs to the cytochrome c oxidase VIIa family. Component of the cytochrome c oxidase (complex IV, CIV), a multisubunit enzyme composed of 14 subunits. The complex is composed of a catalytic core of 3 subunits MT-CO1, MT-CO2 and MT-CO3, encoded in the mitochondrial DNA, and 11 supernumerary subunits COX4I, COX5A, COX5B, COX6A, COX6B, COX6C, COX7A, COX7B, COX7C, COX8 and NDUFA4, which are encoded in the nuclear genome. The complex exists as a monomer or a dimer and forms supercomplexes (SCs) in the inner mitochondrial membrane with NADH-ubiquinone oxidoreductase (complex I, CI) and ubiquinol-cytochrome c oxidoreductase (cytochrome b-c1 complex, complex III, CIII), resulting in different assemblies (supercomplex SCI(1)III(2)IV(1) and megacomplex MCI(2)III(2)IV(2)). Interacts with PET100.

The protein resides in the mitochondrion inner membrane. It functions in the pathway energy metabolism; oxidative phosphorylation. Its function is as follows. Component of the cytochrome c oxidase, the last enzyme in the mitochondrial electron transport chain which drives oxidative phosphorylation. The respiratory chain contains 3 multisubunit complexes succinate dehydrogenase (complex II, CII), ubiquinol-cytochrome c oxidoreductase (cytochrome b-c1 complex, complex III, CIII) and cytochrome c oxidase (complex IV, CIV), that cooperate to transfer electrons derived from NADH and succinate to molecular oxygen, creating an electrochemical gradient over the inner membrane that drives transmembrane transport and the ATP synthase. Cytochrome c oxidase is the component of the respiratory chain that catalyzes the reduction of oxygen to water. Electrons originating from reduced cytochrome c in the intermembrane space (IMS) are transferred via the dinuclear copper A center (CU(A)) of subunit 2 and heme A of subunit 1 to the active site in subunit 1, a binuclear center (BNC) formed by heme A3 and copper B (CU(B)). The BNC reduces molecular oxygen to 2 water molecules using 4 electrons from cytochrome c in the IMS and 4 protons from the mitochondrial matrix. The protein is Cytochrome c oxidase subunit 7A2, mitochondrial (COX7A2) of Canis lupus familiaris (Dog).